The sequence spans 573 residues: Potassium-transporting ATPase potassium-binding subunit (573 aa).

10 helical membrane-spanning segments follow: residues 6–26 (ILFA…GSYI), 66–86 (FFSL…ILLL), 135–155 (ALAV…IALI), 177–197 (VFWI…FQGV), 257–277 (IQMV…GKWV), 283–303 (GWLI…VMTI), 382–402 (IFGG…LAVF), 428–448 (MFAL…AAVI), 493–513 (ITIA…VIML), and 537–557 (FIFA…TIFP).

Belongs to the KdpA family. The system is composed of three essential subunits: KdpA, KdpB and KdpC.

The protein resides in the cell inner membrane. Part of the high-affinity ATP-driven potassium transport (or Kdp) system, which catalyzes the hydrolysis of ATP coupled with the electrogenic transport of potassium into the cytoplasm. This subunit binds the periplasmic potassium ions and delivers the ions to the membrane domain of KdpB through an intramembrane tunnel. The chain is Potassium-transporting ATPase potassium-binding subunit from Francisella tularensis subsp. tularensis (strain WY96-3418).